Consider the following 56-residue polypeptide: Large ribosomal subunit protein bL33 (56 aa).

Residues 1-12 (MASKGGREKIKL) show a composition bias toward basic and acidic residues. The disordered stretch occupies residues 1–27 (MASKGGREKIKLESTAGTGHFYTTNKN).

Belongs to the bacterial ribosomal protein bL33 family.

This chain is Large ribosomal subunit protein bL33, found in Leptothrix cholodnii (strain ATCC 51168 / LMG 8142 / SP-6) (Leptothrix discophora (strain SP-6)).